The primary structure comprises 234 residues: Proteasome subunit alpha type-2 (234 aa).

Position 2 is an N-acetylalanine (A2). Position 6 is a phosphotyrosine (Y6). 3 positions are modified to phosphoserine: S7, S14, and S16. Y24 is modified (phosphotyrosine). The residue at position 70 (K70) is an N6-acetyllysine. Y76 and Y121 each carry phosphotyrosine. At K171 the chain carries N6-acetyllysine.

The protein belongs to the peptidase T1A family. In terms of assembly, the 26S proteasome consists of a 20S proteasome core and two 19S regulatory subunits. The 20S proteasome core is a barrel-shaped complex made of 28 subunits that are arranged in four stacked rings. The two outer rings are each formed by seven alpha subunits, and the two inner rings are formed by seven beta subunits. The proteolytic activity is exerted by three beta-subunits PSMB5, PSMB6 and PSMB7. Phosphorylated on tyrosine residues; which may be important for nuclear import.

The protein localises to the cytoplasm. It is found in the nucleus. Component of the 20S core proteasome complex involved in the proteolytic degradation of most intracellular proteins. This complex plays numerous essential roles within the cell by associating with different regulatory particles. Associated with two 19S regulatory particles, forms the 26S proteasome and thus participates in the ATP-dependent degradation of ubiquitinated proteins. The 26S proteasome plays a key role in the maintenance of protein homeostasis by removing misfolded or damaged proteins that could impair cellular functions, and by removing proteins whose functions are no longer required. Associated with the PA200 or PA28, the 20S proteasome mediates ubiquitin-independent protein degradation. This type of proteolysis is required in several pathways including spermatogenesis (20S-PA200 complex) or generation of a subset of MHC class I-presented antigenic peptides (20S-PA28 complex). This is Proteasome subunit alpha type-2 (PSMA2) from Bos taurus (Bovine).